A 373-amino-acid chain; its full sequence is 3 beta-hydroxysteroid dehydrogenase/Delta 5--&gt;4-isomerase type 1 (373 aa).

Residues 10–15 (GAGGFV), Tyr155, and Lys159 each bind NADP(+). Residue Lys159 is the Proton donor of the active site. The chain crosses the membrane as a helical span at residues 288–308 (LPLLYWLAFLLETVSFLLRPV).

This sequence belongs to the 3-beta-HSD family. Steroidogenic tissues (includes testes, ovaries and adrenal glands).

It localises to the endoplasmic reticulum membrane. It is found in the mitochondrion membrane. It catalyses the reaction a 3beta-hydroxy-Delta(5)-steroid + NAD(+) = a 3-oxo-Delta(5)-steroid + NADH + H(+). It carries out the reaction pregnenolone + NAD(+) = pregn-5-ene-3,20-dione + NADH + H(+). The catalysed reaction is 3beta-hydroxyandrost-5-en-17-one + NAD(+) = androst-5-ene-3,17-dione + NADH + H(+). The enzyme catalyses androst-5-en-3beta,17beta-diol + NAD(+) = 17beta-hydroxy-androst-5-en-3-one + NADH + H(+). It catalyses the reaction a 3beta-hydroxysteroid + NADP(+) = a 3-oxosteroid + NADPH + H(+). It carries out the reaction 5alpha-androstane-3beta,17beta-diol + NADP(+) = 17beta-hydroxy-5alpha-androstan-3-one + NADPH + H(+). The catalysed reaction is 3beta-hydroxy-5alpha-androstan-17-one + NADP(+) = 5alpha-androstan-3,17-dione + NADPH + H(+). The enzyme catalyses a 3-oxo-Delta(5)-steroid = a 3-oxo-Delta(4)-steroid. It catalyses the reaction pregn-5-ene-3,20-dione = progesterone. It carries out the reaction androst-5-ene-3,17-dione = androst-4-ene-3,17-dione. The catalysed reaction is 17beta-hydroxy-androst-5-en-3-one = testosterone. The enzyme catalyses 5alpha-androstane-3beta,17beta-diol + NAD(+) = 17beta-hydroxy-5alpha-androstan-3-one + NADH + H(+). It functions in the pathway steroid hormone biosynthesis. Its pathway is steroid metabolism. In terms of biological role, a bifunctional enzyme responsible for the oxidation and isomerization of 3beta-hydroxy-Delta(5)-steroid precursors to 3-oxo-Delta(4)-steroids, an essential step in steroid hormone biosynthesis. Specifically catalyzes the conversion of pregnenolone to progesterone, 17alpha-hydroxypregnenolone to 17alpha-hydroxyprogesterone, dehydroepiandrosterone (DHEA) to 4-androstenedione, and androstenediol to testosterone. Additionally, catalyzes the interconversion between 3beta-hydroxy and 3-oxo-5alpha-androstane steroids controlling the bioavalability of the active forms. Specifically converts dihydrotestosterone to its inactive form 5alpha-androstanediol, that does not bind androgen receptor/AR. Also converts androstanedione, a precursor of testosterone and estrone, to epiandrosterone. Expected to use NAD(+) as preferred electron donor for the 3-beta-hydroxy-steroid dehydrogenase activity and NADPH for the 3-ketosteroid reductase activity. The sequence is that of 3 beta-hydroxysteroid dehydrogenase/Delta 5--&gt;4-isomerase type 1 from Mus musculus (Mouse).